Here is a 279-residue protein sequence, read N- to C-terminus: NH(3)-dependent NAD(+) synthetase (279 aa).

Residue 46 to 53 (GISGGQDS) coordinates ATP. Residue D52 coordinates Mg(2+). Residue R145 coordinates deamido-NAD(+). Residue T165 coordinates ATP. E170 contacts Mg(2+). Deamido-NAD(+) is bound by residues K178 and D185. K194 and T216 together coordinate ATP. Position 265 to 266 (265 to 266 (HK)) interacts with deamido-NAD(+).

It belongs to the NAD synthetase family. Homodimer.

The catalysed reaction is deamido-NAD(+) + NH4(+) + ATP = AMP + diphosphate + NAD(+) + H(+). It functions in the pathway cofactor biosynthesis; NAD(+) biosynthesis; NAD(+) from deamido-NAD(+) (ammonia route): step 1/1. In terms of biological role, catalyzes the ATP-dependent amidation of deamido-NAD to form NAD. Uses ammonia as a nitrogen source. The polypeptide is NH(3)-dependent NAD(+) synthetase (Rhodococcus jostii (strain RHA1)).